Here is a 424-residue protein sequence, read N- to C-terminus: Protein SamB (424 aa).

Residues 2–189 enclose the UmuC domain; it reads FALADVNSFY…QPVEEIWGVG (188 aa).

The protein belongs to the DNA polymerase type-Y family.

Involved in UV protection and mutation. The sequence is that of Protein SamB (samB) from Salmonella typhimurium.